A 232-amino-acid polypeptide reads, in one-letter code: Polycomb group RING finger protein 5-B (232 aa).

Residues 18 to 57 (CFVCKGYLIKPTTVTECLHTFCKSCIVQHFEDSNDCPKCG) form an RING-type zinc finger. Over residues 93 to 104 (QEDEFWRRKESN) the composition is skewed to basic and acidic residues. Residues 93 to 128 (QEDEFWRRKESNDENGPMCKKRRVDEEDDDKGDGDY) are disordered.

In terms of assembly, component of a PRC1-like complex.

It localises to the nucleus. Functionally, component of Polycomb group (PcG) multiprotein complexes; the complex class is required to maintain the transcriptionally repressive state of some genes. This Danio rerio (Zebrafish) protein is Polycomb group RING finger protein 5-B (pcgf5b).